The chain runs to 428 residues: Nucleoside diphosphate phosphatase ENTPD5 (428 aa).

Residues 1 to 24 form the signal peptide; sequence MATSWGTVFFMLVVSCVCSAVSHR. E172 acts as the Proton acceptor in catalysis. N-linked (GlcNAc...) asparagine glycosylation is present at N232. 2 disulfides stabilise this stretch: C272–C303 and C363–C377. N-linked (GlcNAc...) asparagine glycosylation is present at N368.

It belongs to the GDA1/CD39 NTPase family. Monomer; active form. Homodimer; disulfide-linked. Homodimers are enzymatically inactive. It depends on Ca(2+) as a cofactor. Mg(2+) is required as a cofactor. N-glycosylated; high-mannose type. Glycosylation is not essential for enzymatic activity. Expressed in adult liver, kidney, prostate, testis and colon. Much weaker expression in other tissues.

It localises to the endoplasmic reticulum. The protein resides in the secreted. It catalyses the reaction a ribonucleoside 5'-diphosphate + H2O = a ribonucleoside 5'-phosphate + phosphate + H(+). It carries out the reaction GDP + H2O = GMP + phosphate + H(+). The catalysed reaction is UDP + H2O = UMP + phosphate + H(+). The enzyme catalyses IDP + H2O = IMP + phosphate + H(+). It catalyses the reaction CDP + H2O = CMP + phosphate + H(+). It carries out the reaction ADP + H2O = AMP + phosphate + H(+). It functions in the pathway protein modification; protein glycosylation. In terms of biological role, hydrolyzes nucleoside diphosphates with a preference for GDP, IDP and UDP compared to ADP and CDP. In the lumen of the endoplasmic reticulum, hydrolyzes UDP that acts as an end-product feedback inhibitor of the UDP-Glc:glycoprotein glucosyltransferases. UMP can be transported back by an UDP-sugar antiporter to the cytosol where it is consumed to regenerate UDP-glucose. Therefore, it positively regulates protein reglucosylation by clearing UDP from the ER lumen and by promoting the regeneration of UDP-glucose. Protein reglucosylation is essential to proper glycoprotein folding and quality control in the ER. This chain is Nucleoside diphosphate phosphatase ENTPD5, found in Homo sapiens (Human).